Here is a 457-residue protein sequence, read N- to C-terminus: Ribosome biogenesis protein YTM1 (457 aa).

A ubiquitin-like (UBL) domain region spans residues 8 to 89; that stretch reads VKVKFFTREK…ETTLTVEYTR (82 aa). Positions 99–457 are sufficient for interaction with ERB1 and association with 66S pre-ribosomes; the sequence is NFNNDDWVSA…INKGDNIFKN (359 aa). WD repeat units follow at residues 101–140, 142–180, 203–241, 282–322, 324–363, 370–410, and 421–457; these read NNDD…EKQY, GHTG…GSVS, GHKA…MTAI, SHTG…CIDT, TTSY…SAKI, GHKN…PMYT, and GVND…IFKN. Positions 172-191 are disordered; the sequence is TKNDDGSVSNNTGDENDEEN.

This sequence belongs to the WD repeat WDR12/YTM1 family. In terms of assembly, component of the NOP7 complex, composed of ERB1, NOP7 and YTM1. The complex is held together by ERB1, which interacts with NOP7 via its N-terminal domain and with YTM1 via a high-affinity interaction between the seven-bladed beta-propeller domains of the 2 proteins. The NOP7 complex associates with the 66S pre-ribosome. Interacts (via UBL domain) with MDN1 (via VWFA/MIDAS domain).

It localises to the nucleus. It is found in the nucleolus. The protein resides in the nucleoplasm. Its function is as follows. Component of the NOP7 complex, which is required for maturation of the 25S and 5.8S ribosomal RNAs and formation of the 60S ribosome. This Candida glabrata (strain ATCC 2001 / BCRC 20586 / JCM 3761 / NBRC 0622 / NRRL Y-65 / CBS 138) (Yeast) protein is Ribosome biogenesis protein YTM1.